A 542-amino-acid chain; its full sequence is MKPIKEIADQLELKDDILYPYGHYIAKIDHRFLKSLENHEDGKLILVTAVTPTPAGEGKTTTSIGLSMSLNRIGKKSIVTLREPSLGPTLGLKGGATGGGRSRVLPSDEINLHFTGDMHAVASAHNLLAAVLDSHIKHGNELKIDITRVFWKRTMDMNDRALRSIVIGLGGSANGFPREDSFIITAASEVMAILALSENMKDLKERLGKIIVALDADRKIVRISDLGIQGAMAVLLKDAINPNLVQTTEGTPALIHCGPFANIAHGTNSIIATKMAMKLSEYTVTEAGFGADLGAEKFIDFVSRVGGFYPNAAVLVATVRALKYHGGANLKNIHEENLEALKEGFKNLRVHVENLRKFNLPVVVALNRFSTDTEKEIAYVVKECEKLGVRVAVSEVFKKGSEGGVELAKAVAEAAKDVEPAYLYEMNDPVEKKIEILAKEIYRAGRVEFSDTAKNALKFIKKHGFDELPVIVAKTPKSISHDPSLRGAPEGYTFVVSDLFVSAGAGFVVALSGDINLMPGLPKKPNALNMDVDDSGNIVGVS.

An ATP-binding site is contributed by 53–60; the sequence is TPAGEGKT.

It belongs to the formate--tetrahydrofolate ligase family.

The catalysed reaction is (6S)-5,6,7,8-tetrahydrofolate + formate + ATP = (6R)-10-formyltetrahydrofolate + ADP + phosphate. Its pathway is one-carbon metabolism; tetrahydrofolate interconversion. The sequence is that of Formate--tetrahydrofolate ligase from Thermotoga maritima (strain ATCC 43589 / DSM 3109 / JCM 10099 / NBRC 100826 / MSB8).